Here is a 438-residue protein sequence, read N- to C-terminus: Transposon Ty2-LR1 Gag polyprotein (438 aa).

Composition is skewed to polar residues over residues 1 to 11 (MESQQLHQNPH), 19 to 39 (ASVT…SASN), and 49 to 60 (KVNSQQETTPGT). 3 disordered regions span residues 1 to 86 (MESQ…GQYQ), 364 to 397 (KNVS…AKAH), and 419 to 438 (SSQY…TERI). The interval 295 to 397 (ENNINVSDRL…SSKPRAAKAH (103 aa)) is RNA-binding. Residues 369-381 (TSPNTTNTKVTTR) are compositionally biased toward low complexity.

In terms of assembly, homotrimer.

Its subcellular location is the cytoplasm. Capsid protein (CA) is the structural component of the virus-like particle (VLP), forming the shell that encapsulates the retrotransposons dimeric RNA genome. The particles are assembled from trimer-clustered units and there are holes in the capsid shells that allow for the diffusion of macromolecules. CA also has nucleocapsid-like chaperone activity, promoting primer tRNA(i)-Met annealing to the multipartite primer-binding site (PBS), dimerization of Ty2 RNA and initiation of reverse transcription. In Saccharomyces cerevisiae (strain ATCC 204508 / S288c) (Baker's yeast), this protein is Transposon Ty2-LR1 Gag polyprotein (TY2A-LR1).